The primary structure comprises 200 residues: Imidazole glycerol phosphate synthase subunit HisH (200 aa).

One can recognise a Glutamine amidotransferase type-1 domain in the interval 3–200; it reads EVALIDAGGA…LRNFLEMDAA (198 aa). Cysteine 78 (nucleophile) is an active-site residue. Catalysis depends on residues histidine 179 and glutamate 181.

In terms of assembly, heterodimer of HisH and HisF.

The protein resides in the cytoplasm. It catalyses the reaction 5-[(5-phospho-1-deoxy-D-ribulos-1-ylimino)methylamino]-1-(5-phospho-beta-D-ribosyl)imidazole-4-carboxamide + L-glutamine = D-erythro-1-(imidazol-4-yl)glycerol 3-phosphate + 5-amino-1-(5-phospho-beta-D-ribosyl)imidazole-4-carboxamide + L-glutamate + H(+). It carries out the reaction L-glutamine + H2O = L-glutamate + NH4(+). It functions in the pathway amino-acid biosynthesis; L-histidine biosynthesis; L-histidine from 5-phospho-alpha-D-ribose 1-diphosphate: step 5/9. Its function is as follows. IGPS catalyzes the conversion of PRFAR and glutamine to IGP, AICAR and glutamate. The HisH subunit catalyzes the hydrolysis of glutamine to glutamate and ammonia as part of the synthesis of IGP and AICAR. The resulting ammonia molecule is channeled to the active site of HisF. The protein is Imidazole glycerol phosphate synthase subunit HisH of Xylella fastidiosa (strain Temecula1 / ATCC 700964).